We begin with the raw amino-acid sequence, 244 residues long: Ribonuclease PH (244 aa).

Phosphate-binding positions include arginine 90 and 128 to 130 (GTR).

Belongs to the RNase PH family. As to quaternary structure, homohexameric ring arranged as a trimer of dimers.

It carries out the reaction tRNA(n+1) + phosphate = tRNA(n) + a ribonucleoside 5'-diphosphate. Functionally, phosphorolytic 3'-5' exoribonuclease that plays an important role in tRNA 3'-end maturation. Removes nucleotide residues following the 3'-CCA terminus of tRNAs; can also add nucleotides to the ends of RNA molecules by using nucleoside diphosphates as substrates, but this may not be physiologically important. Probably plays a role in initiation of 16S rRNA degradation (leading to ribosome degradation) during starvation. The chain is Ribonuclease PH from Prochlorococcus marinus (strain MIT 9313).